Consider the following 236-residue polypeptide: Adenosine 5'-phosphosulfate reductase (236 aa).

[4Fe-4S] cluster contacts are provided by cysteine 122, cysteine 123, cysteine 205, and cysteine 208. Catalysis depends on cysteine 231, which acts as the Nucleophile; cysteine thiosulfonate intermediate.

Belongs to the PAPS reductase family. CysH subfamily. The cofactor is [4Fe-4S] cluster.

The protein resides in the cytoplasm. It carries out the reaction [thioredoxin]-disulfide + sulfite + AMP + 2 H(+) = adenosine 5'-phosphosulfate + [thioredoxin]-dithiol. The protein operates within sulfur metabolism; hydrogen sulfide biosynthesis; sulfite from sulfate. Catalyzes the formation of sulfite from adenosine 5'-phosphosulfate (APS) using thioredoxin as an electron donor. The sequence is that of Adenosine 5'-phosphosulfate reductase from Mycolicibacterium smegmatis (strain ATCC 700084 / mc(2)155) (Mycobacterium smegmatis).